We begin with the raw amino-acid sequence, 198 residues long: FMN-dependent NADH:quinone oxidoreductase (198 aa).

Position 96–99 (96–99) interacts with FMN; sequence MYNF.

Belongs to the azoreductase type 1 family. In terms of assembly, homodimer. FMN is required as a cofactor.

It carries out the reaction 2 a quinone + NADH + H(+) = 2 a 1,4-benzosemiquinone + NAD(+). The enzyme catalyses N,N-dimethyl-1,4-phenylenediamine + anthranilate + 2 NAD(+) = 2-(4-dimethylaminophenyl)diazenylbenzoate + 2 NADH + 2 H(+). Quinone reductase that provides resistance to thiol-specific stress caused by electrophilic quinones. In terms of biological role, also exhibits azoreductase activity. Catalyzes the reductive cleavage of the azo bond in aromatic azo compounds to the corresponding amines. This Burkholderia thailandensis (strain ATCC 700388 / DSM 13276 / CCUG 48851 / CIP 106301 / E264) protein is FMN-dependent NADH:quinone oxidoreductase.